A 67-amino-acid polypeptide reads, in one-letter code: Large ribosomal subunit protein bL35 (67 aa).

It belongs to the bacterial ribosomal protein bL35 family.

This Brachyspira hyodysenteriae (strain ATCC 49526 / WA1) protein is Large ribosomal subunit protein bL35.